A 186-amino-acid chain; its full sequence is Casparian strip membrane protein 6 (186 aa).

Topologically, residues 1–23 (MKAGPIELGEGKSSAPKAAVNRG) are cytoplasmic. A helical membrane pass occupies residues 24–44 (VAILDFILRILAFIGTLGSAI). Residues 45 to 73 (SMATTNETLPFFTQFIRFRAEYDDLPTFT) lie on the Extracellular side of the membrane. N-linked (GlcNAc...) asparagine glycosylation is present at N50. The chain crosses the membrane as a helical span at residues 74 to 94 (FFVVANGVVSAYLLFSLPFSI). At 95–106 (FNIVRSKAQNSR) the chain is on the cytoplasmic side. Residues 107 to 127 (ILLIILDTAMLGLLSAGASAA) form a helical membrane-spanning segment. At 128-160 (AAIVYLAHQGNVRTNWSAICQQFNSFCERISGS) the chain is on the extracellular side. Residue N142 is glycosylated (N-linked (GlcNAc...) asparagine). A helical membrane pass occupies residues 161–181 (LIGSFIGVVVFILLISLSAVA). At 182–186 (LSRHK) the chain is on the cytoplasmic side.

The protein belongs to the Casparian strip membrane proteins (CASP) family. In terms of assembly, homodimer and heterodimers.

It localises to the cell membrane. Regulates membrane-cell wall junctions and localized cell wall deposition. Required for establishment of the Casparian strip membrane domain (CSD) and the subsequent formation of Casparian strips, a cell wall modification of the root endodermis that determines an apoplastic barrier between the intraorganismal apoplasm and the extraorganismal apoplasm and prevents lateral diffusion. The sequence is that of Casparian strip membrane protein 6 from Populus trichocarpa (Western balsam poplar).